We begin with the raw amino-acid sequence, 295 residues long: MLKLSRSANLRLVQLPAARLSGNGAKLLTQRGFFTVTRLWQSNGKKPLSRVPVGGTPIKDNGKVREGSIEFSTGKAIALFLAVGGALSYFFNREKRRLETQKEAEANRGYGKPSLGGPFHLEDMYGNEFTEKNLLGKFSIIYFGFSNCPDICPDELDKLGLWLNTLSSKYGITLQPLFITCDPARDSPAVLKEYLSDFHPSILGLTGTFDEVKNACKKYRVYFSTPPNVKPGQDYLVDHSIFFYLMDPEGQFVDALGRNYDEKTGVDKIVEHVKSYVPAEQRAKQKEAWYSFLFK.

The chain crosses the membrane as a helical span at residues 76–92 (AIALFLAVGGALSYFFN). Residues Cys-148, Cys-152, and His-239 each coordinate Cu cation.

Belongs to the SCO1/2 family.

Its subcellular location is the mitochondrion inner membrane. Required for the accumulation of subunits 1 and 2 of cytochrome c oxidase complex. Thought to play a role in either mitochondrial copper transport or insertion of copper into the active site of COX. In Saccharomyces cerevisiae (strain ATCC 204508 / S288c) (Baker's yeast), this protein is Protein SCO1, mitochondrial (SCO1).